Reading from the N-terminus, the 467-residue chain is 3-isopropylmalate dehydratase large subunit (467 aa).

Residues cysteine 348, cysteine 409, and cysteine 412 each coordinate [4Fe-4S] cluster. The disordered stretch occupies residues 423–449 (NERSISTSNRNFEGRQGKGSRTHLASP).

The protein belongs to the aconitase/IPM isomerase family. LeuC type 1 subfamily. As to quaternary structure, heterodimer of LeuC and LeuD. It depends on [4Fe-4S] cluster as a cofactor.

The catalysed reaction is (2R,3S)-3-isopropylmalate = (2S)-2-isopropylmalate. The protein operates within amino-acid biosynthesis; L-leucine biosynthesis; L-leucine from 3-methyl-2-oxobutanoate: step 2/4. Functionally, catalyzes the isomerization between 2-isopropylmalate and 3-isopropylmalate, via the formation of 2-isopropylmaleate. This is 3-isopropylmalate dehydratase large subunit from Bifidobacterium longum subsp. infantis (strain ATCC 15697 / DSM 20088 / JCM 1222 / NCTC 11817 / S12).